The following is a 625-amino-acid chain: Coagulation factor XI (625 aa).

The first 18 residues, M1–G18, serve as a signal peptide directing secretion. 4 consecutive Apple domains span residues C20 to C103, C110 to C193, C200 to C283, and C291 to C374. Disulfide bonds link C20–C103, C46–C76, C50–C56, C110–C193, C136–C165, C140–C146, C200–C283, C226–C255, C230–C236, C291–C374, C317–C346, C321–C327, C380–C500, C416–C432, C514–C581, C545–C560, and C571–C599. N90 and N126 each carry an N-linked (GlcNAc...) (complex) asparagine glycan. N163 carries N-linked (GlcNAc...) (complex) asparagine; atypical glycosylation. The Peptidase S1 domain occupies I388–Q623. H431 acts as the Charge relay system in catalysis. Residue N450 is glycosylated (N-linked (GlcNAc...) (complex) asparagine). The active-site Charge relay system is the D480. N-linked (GlcNAc...) (complex) asparagine glycosylation is present at N491. K547–R550 contacts heparin. The Charge relay system role is filled by S575.

The protein belongs to the peptidase S1 family. Plasma kallikrein subfamily. In terms of assembly, homodimer; disulfide-linked. Can form non-covalently bonded homodimers. After activation the heavy and light chains are also linked by a disulfide bond. Interacts (activated) with F9 (inactive and activated) in calcium-dependent manner. Forms a heterodimer with SERPINA5. Interacts with Anopheles gambiae D7L2. Interacts (activated) with guianensin, an anticoagulant protein from Simulium guianense saliva. N-glycosylated on both chains. N-glycosylated sites mainly consist of nonfucosylated sialylated biantennary (in high abundance) and/or triantennary (in low abundance) complex structures. Glycosylation at Asn-163 uses a rare non-canonical Asn-X-Cys glycosite. In terms of processing, activated by factor XIIa (or XII), which cleaves each polypeptide after Arg-387 into the light chain, which contains the active site, and the heavy chain, which associates with high molecular weight (HMW) kininogen. Activated by F12 (activated); the presence of negatively charged surfaces accelerates activation. Activated by F2 (thrombin); the presence of negatively charged surfaces, such as polyphosphate and dextran sulfate, strongly accelerates activation. Autoactivated; the presence of negatively charged surfaces, such as polyphosphate and dextran sulfate, accelerates autoactivation and autolysis. As to expression, isoform 2 is produced by platelets and megakaryocytes but absent from other blood cells.

The protein localises to the secreted. It carries out the reaction Selective cleavage of Arg-|-Ala and Arg-|-Val bonds in factor IX to form factor IXa.. Inhibited by SERPINA5. Factor XI triggers the middle phase of the intrinsic pathway of blood coagulation by activating factor IX. This chain is Coagulation factor XI (F11), found in Homo sapiens (Human).